The chain runs to 268 residues: Nickel import ATP-binding protein NikE (268 aa).

In terms of domain architecture, ABC transporter spans 4-252 (LNVSDLSHHY…SSDAGRVLQN (249 aa)). ATP is bound at residue 45-52 (GRSGCGKS).

Belongs to the ABC transporter superfamily. Nickel importer (TC 3.A.1.5.3) family. The complex is composed of two ATP-binding proteins (NikD and NikE), two transmembrane proteins (NikB and NikC) and a solute-binding protein (NikA).

Its subcellular location is the cell inner membrane. It carries out the reaction Ni(2+)(out) + ATP + H2O = Ni(2+)(in) + ADP + phosphate + H(+). In terms of biological role, part of the ABC transporter complex NikABCDE involved in nickel import. Responsible for energy coupling to the transport system. In Escherichia coli O6:K15:H31 (strain 536 / UPEC), this protein is Nickel import ATP-binding protein NikE.